The primary structure comprises 86 residues: Bacteriocin thailandicin (86 aa).

Residues 23 to 86 constitute a cross-link (cyclopeptide (Leu-Trp)); it reads LTANLGISSY…KYGAKYSAAW (64 aa).

It localises to the secreted. In terms of biological role, cyclopeptide antibiotic with bacteriolytic activity against the Gram-positive bacteria S.aureus and S.thermophilus, and lower activity against the Gram-negative bacteria E.coli and P.aeruginosa. This is Bacteriocin thailandicin from Enterococcus thailandicus.